The chain runs to 281 residues: Large ribosomal subunit protein uL2 (281 aa).

The segment at 222–281 is disordered; that stretch reads TVRGSVMNPNDHPHGGGEGRTPIGRKSPVTPWGKKALGVKTRNTKKPSEKLIVRKRNAKK.

It belongs to the universal ribosomal protein uL2 family. In terms of assembly, part of the 50S ribosomal subunit. Forms a bridge to the 30S subunit in the 70S ribosome.

One of the primary rRNA binding proteins. Required for association of the 30S and 50S subunits to form the 70S ribosome, for tRNA binding and peptide bond formation. It has been suggested to have peptidyltransferase activity; this is somewhat controversial. Makes several contacts with the 16S rRNA in the 70S ribosome. The chain is Large ribosomal subunit protein uL2 from Mesoplasma florum (strain ATCC 33453 / NBRC 100688 / NCTC 11704 / L1) (Acholeplasma florum).